A 30-amino-acid polypeptide reads, in one-letter code: Hemocyanin subunit 2 (30 aa).

This sequence belongs to the tyrosinase family. Hemocyanin subfamily. Hemolymph.

It is found in the secreted. Its subcellular location is the extracellular space. Its function is as follows. Hemocyanins are copper-containing oxygen carriers occurring freely dissolved in the hemolymph of many mollusks and arthropods. The chain is Hemocyanin subunit 2 from Homarus americanus (American lobster).